The primary structure comprises 883 residues: MMDMQVRKVRKPPACTQCRKRKIGCDRAKPICGNCVKYNKPDCFYPDGPGKMVAVPSASGMSTHGNGQGSNHFSQGNGVNQKNVMIQTQYPIMQTSIEAFNFSFNPSVDTAMQWTKAASYQNNNTNNNTAPRQNSSTVSSNVHGNTIVRSDSPDVPSMDQIREYNTRLQLVNAQSFDYTDNPYSFNVGINQDSAVFDLMTSPFTQEEVLIKEIDFLKNKLLDLQSLQLKSLKEKSNLNADNTTANKINKTGENSKKGKVDGKRAGFDHQTSRTSQSSQKYFTALTITDVQSLVQVKPLKDTPNYLFTKNFIIFRDHYLFKFYNILHDICHINQFKVSPPNNKNHQQYMEVCKVNFPPKAIIIETLNSESLNNLNIEEFLPIFDKTLLLEFVHNSFPNGDTCPSFSTVDLPLSQLTKLGELTVLLLLLNDSMTLFNKQAINNHVSALMNNLRLIRSQITLINLEYYDQETIKFIAITKFYESLYMHDDHKSSLDEDLSCLLSFQIKDFKLFHFLKKMYYSRHSLLGQSSFMVPAAENLSPIPASIDTNDIPLIANDLKLLETQAKLINILQGVPFYLPVNLTKIESLLETLTMGVSNTVDLYFHDNEVRKEWKDTLNFINTIVYTNFFLFVQNESSLSMAVQHSSNNNKTSNSERCAKDLMKIISNMHIFYSITFNFIFPIKSIKSFSSGNNRFHSNGKEFLFANHFIEILQNFIAITFAIFQRCEVILYDEFYKNLSNEEINVQLLLIHDKILEILKKIEIIVSFLRDEMNSNGSFKSIKGFNKVLNLIKYMLRFSKKKQNFARNSDNNNVTDYSQSAKNKNVLLKFPVSELNRIYLKFKEISDFLMEREVVQRSIIIDKDLESDNLGITTANFNDFYDAFYN.

Residues 14-45 (ACTQCRKRKIGCDRAKPICGNCVKYNKPDCFY) constitute a DNA-binding region (zn(2)-C6 fungal-type). Disordered regions lie at residues 121 to 157 (QNNN…DVPS) and 241 to 273 (NTTA…TSRT). Residues 130-149 (APRQNSSTVSSNVHGNTIVR) are compositionally biased toward polar residues. Ser150 carries the phosphoserine modification. The span at 241 to 251 (NTTANKINKTG) shows a compositional bias: polar residues. Over residues 252–270 (ENSKKGKVDGKRAGFDHQT) the composition is skewed to basic and acidic residues.

In terms of assembly, forms a heteromer with RSC3. Interacts with NPL6. Component of the two forms of the RSC complex composed of at least either RSC1 or RSC2, and ARP7, ARP9, LDB7, NPL6, RSC3, RSC30, RSC4, RSC58, RSC6, RSC8, RSC9, SFH1, STH1, HTL1 and probably RTT102. The complexes interact with histone and histone variant components of centromeric chromatin. Component of a fungal-specific module (HTL1-LDB7-NPL6-RSC3-RSC30) within the RSC complex.

The protein resides in the nucleus. In terms of biological role, component of the chromatin structure-remodeling complex (RSC), which is involved in transcription regulation and nucleosome positioning. RSC is responsible for the transfer of a histone octamer from a nucleosome core particle to naked DNA. The reaction requires ATP and involves an activated RSC-nucleosome intermediate. Remodeling reaction also involves DNA translocation, DNA twist and conformational change. As a reconfigurer of centromeric and flanking nucleosomes, RSC complex is required both for proper kinetochore function in chromosome segregation and, via a PKC1-dependent signaling pathway, for organization of the cellular cytoskeleton. This subunit is required for transcription of ribosomal protein genes and genes involved in the integrity of the cell wall. Together with HTL1, LDB7, NPL6, RSC3 components, defines a fungal-specific module within the RSC complex that plays a role in many cellular functions including the maintenance of cell wall integrity. The sequence is that of Chromatin structure-remodeling complex protein RSC30 (RSC30) from Saccharomyces cerevisiae (strain ATCC 204508 / S288c) (Baker's yeast).